A 248-amino-acid polypeptide reads, in one-letter code: 3-deoxy-manno-octulosonate cytidylyltransferase (248 aa).

The protein belongs to the KdsB family.

The protein resides in the cytoplasm. The catalysed reaction is 3-deoxy-alpha-D-manno-oct-2-ulosonate + CTP = CMP-3-deoxy-beta-D-manno-octulosonate + diphosphate. The protein operates within nucleotide-sugar biosynthesis; CMP-3-deoxy-D-manno-octulosonate biosynthesis; CMP-3-deoxy-D-manno-octulosonate from 3-deoxy-D-manno-octulosonate and CTP: step 1/1. Its pathway is bacterial outer membrane biogenesis; lipopolysaccharide biosynthesis. Functionally, activates KDO (a required 8-carbon sugar) for incorporation into bacterial lipopolysaccharide in Gram-negative bacteria. This Enterobacter sp. (strain 638) protein is 3-deoxy-manno-octulosonate cytidylyltransferase.